The sequence spans 242 residues: Caffeoyl-CoA O-methyltransferase 2 (242 aa).

K16 provides a ligand contact to substrate. S-adenosyl-L-methionine is bound by residues T58, E80, 82–83 (GV), S88, D106, and A135. D158 is a binding site for substrate. Position 158 (D158) interacts with a divalent metal cation. D160 lines the S-adenosyl-L-methionine pocket. The a divalent metal cation site is built by D184 and N185. N189 contacts substrate.

The protein belongs to the class I-like SAM-binding methyltransferase superfamily. Cation-dependent O-methyltransferase family. CCoAMT subfamily. Mg(2+) serves as cofactor. Mostly expressed in the bottom and middle parts of the stems.

It catalyses the reaction (E)-caffeoyl-CoA + S-adenosyl-L-methionine = (E)-feruloyl-CoA + S-adenosyl-L-homocysteine + H(+). Its pathway is aromatic compound metabolism; phenylpropanoid biosynthesis. Methylates caffeoyl-CoA to feruloyl-CoA and 5-hydroxyferuloyl-CoA to sinapoyl-CoA. Plays a role in the synthesis of feruloylated polysaccharides. Involved in the reinforcement of the plant cell wall. Also involved in the responding to wounding or pathogen challenge by the increased formation of cell wall-bound ferulic acid polymers. Methylates 5-hydroxyferulolyl-CoA more efficiently than caffeoyl-CoA. This is Caffeoyl-CoA O-methyltransferase 2 (CCOAOMT2) from Nicotiana tabacum (Common tobacco).